The following is a 241-amino-acid chain: Probable transcriptional regulatory protein lin1570 (241 aa).

Polar residues predominate over residues 1 to 14 (MAGHSKWNNIQGRK). The interval 1–22 (MAGHSKWNNIQGRKNAQDSKRS) is disordered.

It belongs to the TACO1 family.

The protein localises to the cytoplasm. This chain is Probable transcriptional regulatory protein lin1570, found in Listeria innocua serovar 6a (strain ATCC BAA-680 / CLIP 11262).